The primary structure comprises 73 residues: Omega-conotoxin CVID (73 aa).

The N-terminal stretch at 1–22 is a signal peptide; it reads MKLTCVVIVAVLLLTACQLITA. Residues 23–45 constitute a propeptide that is removed on maturation; that stretch reads DDSRGTQKHRALRSDTKLSMSTR. Disulfide bonds link cysteine 46–cysteine 61, cysteine 53–cysteine 65, and cysteine 60–cysteine 72. Position 72 is a cysteine amide (cysteine 72).

This sequence belongs to the conotoxin O1 superfamily. In terms of tissue distribution, expressed by the venom duct.

The protein localises to the secreted. In terms of biological role, omega-conotoxins act at presynaptic membranes, they bind and block voltage-gated calcium channels. This toxin inhibits neurotransmitter release, it blocks N-type calcium channels, probably a N-type (Cav2.2/CACNA1B) calcium channel variant. This is Omega-conotoxin CVID from Conus catus (Cat cone).